A 276-amino-acid chain; its full sequence is Undecaprenyl-diphosphatase (276 aa).

The next 8 membrane-spanning stretches (helical) occupy residues 1-21 (MHWL…FLPV), 41-61 (LLLD…VFFA), 97-117 (ALLI…FHKI), 121-141 (LFAS…LLWA), 155-175 (VTWG…LPGI), 200-220 (FLLS…DASA), 231-251 (LGGI…LAIV), and 256-276 (LWWF…ANFV).

Belongs to the UppP family.

The protein resides in the cell inner membrane. It catalyses the reaction di-trans,octa-cis-undecaprenyl diphosphate + H2O = di-trans,octa-cis-undecaprenyl phosphate + phosphate + H(+). Catalyzes the dephosphorylation of undecaprenyl diphosphate (UPP). Confers resistance to bacitracin. The chain is Undecaprenyl-diphosphatase from Desulfatibacillum aliphaticivorans.